The following is a 46-amino-acid chain: Large ribosomal subunit protein bL36 (46 aa).

It belongs to the bacterial ribosomal protein bL36 family.

In Photorhabdus laumondii subsp. laumondii (strain DSM 15139 / CIP 105565 / TT01) (Photorhabdus luminescens subsp. laumondii), this protein is Large ribosomal subunit protein bL36.